Reading from the N-terminus, the 565-residue chain is Proline--tRNA ligase (565 aa).

It belongs to the class-II aminoacyl-tRNA synthetase family. ProS type 1 subfamily. In terms of assembly, homodimer.

The protein resides in the cytoplasm. It catalyses the reaction tRNA(Pro) + L-proline + ATP = L-prolyl-tRNA(Pro) + AMP + diphosphate. Its function is as follows. Catalyzes the attachment of proline to tRNA(Pro) in a two-step reaction: proline is first activated by ATP to form Pro-AMP and then transferred to the acceptor end of tRNA(Pro). As ProRS can inadvertently accommodate and process non-cognate amino acids such as alanine and cysteine, to avoid such errors it has two additional distinct editing activities against alanine. One activity is designated as 'pretransfer' editing and involves the tRNA(Pro)-independent hydrolysis of activated Ala-AMP. The other activity is designated 'posttransfer' editing and involves deacylation of mischarged Ala-tRNA(Pro). The misacylated Cys-tRNA(Pro) is not edited by ProRS. The polypeptide is Proline--tRNA ligase (Lactobacillus delbrueckii subsp. bulgaricus (strain ATCC BAA-365 / Lb-18)).